The following is a 167-amino-acid chain: NAD(P)H-quinone oxidoreductase subunit I, chloroplastic (167 aa).

4Fe-4S ferredoxin-type domains lie at Gly55–Lys84 and Leu95–Glu124. Positions 64, 67, 70, 74, 104, 107, 110, and 114 each coordinate [4Fe-4S] cluster.

It belongs to the complex I 23 kDa subunit family. As to quaternary structure, NDH is composed of at least 16 different subunits, 5 of which are encoded in the nucleus. [4Fe-4S] cluster serves as cofactor.

The protein resides in the plastid. Its subcellular location is the chloroplast thylakoid membrane. The enzyme catalyses a plastoquinone + NADH + (n+1) H(+)(in) = a plastoquinol + NAD(+) + n H(+)(out). It carries out the reaction a plastoquinone + NADPH + (n+1) H(+)(in) = a plastoquinol + NADP(+) + n H(+)(out). NDH shuttles electrons from NAD(P)H:plastoquinone, via FMN and iron-sulfur (Fe-S) centers, to quinones in the photosynthetic chain and possibly in a chloroplast respiratory chain. The immediate electron acceptor for the enzyme in this species is believed to be plastoquinone. Couples the redox reaction to proton translocation, and thus conserves the redox energy in a proton gradient. The sequence is that of NAD(P)H-quinone oxidoreductase subunit I, chloroplastic from Jasminum nudiflorum (Winter jasmine).